A 185-amino-acid chain; its full sequence is Elongation factor P (185 aa).

This sequence belongs to the elongation factor P family.

The protein localises to the cytoplasm. Its pathway is protein biosynthesis; polypeptide chain elongation. Its function is as follows. Involved in peptide bond synthesis. Stimulates efficient translation and peptide-bond synthesis on native or reconstituted 70S ribosomes in vitro. Probably functions indirectly by altering the affinity of the ribosome for aminoacyl-tRNA, thus increasing their reactivity as acceptors for peptidyl transferase. The protein is Elongation factor P of Bacillus cytotoxicus (strain DSM 22905 / CIP 110041 / 391-98 / NVH 391-98).